Here is a 467-residue protein sequence, read N- to C-terminus: MAP kinase-interacting serine/threonine-protein kinase 2 (467 aa).

The Protein kinase domain maps to 83-367 (QLQQEILGEG…AAQVLQHPWV (285 aa)). ATP contacts are provided by residues 89–97 (LGEGAYAKV) and K112. D204 serves as the catalytic Proton acceptor. Zn(2+) is bound by residues C298, C310, and C313. The tract at residues 432–467 (MQLSPPSESKLAKRRQQGSKGGISPPSLAPLLIVSD) is disordered.

The protein belongs to the protein kinase superfamily. CAMK Ser/Thr protein kinase family. It depends on Mg(2+) as a cofactor. Requires Zn(2+) as cofactor.

It catalyses the reaction L-seryl-[protein] + ATP = O-phospho-L-seryl-[protein] + ADP + H(+). The catalysed reaction is L-threonyl-[protein] + ATP = O-phospho-L-threonyl-[protein] + ADP + H(+). In terms of biological role, may play a role in the response to environmental stress and cytokines. Appears to regulate translation by phosphorylating EIF4E, thus increasing the affinity of this protein for the 7-methylguanosine-containing mRNA cap. This chain is MAP kinase-interacting serine/threonine-protein kinase 2 (mknk2), found in Xenopus laevis (African clawed frog).